We begin with the raw amino-acid sequence, 314 residues long: Methionyl-tRNA formyltransferase (314 aa).

A (6S)-5,6,7,8-tetrahydrofolate-binding site is contributed by 113-116 (SLLP).

It belongs to the Fmt family.

It catalyses the reaction L-methionyl-tRNA(fMet) + (6R)-10-formyltetrahydrofolate = N-formyl-L-methionyl-tRNA(fMet) + (6S)-5,6,7,8-tetrahydrofolate + H(+). In terms of biological role, attaches a formyl group to the free amino group of methionyl-tRNA(fMet). The formyl group appears to play a dual role in the initiator identity of N-formylmethionyl-tRNA by promoting its recognition by IF2 and preventing the misappropriation of this tRNA by the elongation apparatus. The protein is Methionyl-tRNA formyltransferase of Chlorobaculum tepidum (strain ATCC 49652 / DSM 12025 / NBRC 103806 / TLS) (Chlorobium tepidum).